The primary structure comprises 134 residues: ATP synthase epsilon chain (134 aa).

This sequence belongs to the ATPase epsilon chain family. F-type ATPases have 2 components, CF(1) - the catalytic core - and CF(0) - the membrane proton channel. CF(1) has five subunits: alpha(3), beta(3), gamma(1), delta(1), epsilon(1). CF(0) has three main subunits: a, b and c.

The protein resides in the cell inner membrane. Functionally, produces ATP from ADP in the presence of a proton gradient across the membrane. The chain is ATP synthase epsilon chain from Rhodospirillum rubrum (strain ATCC 11170 / ATH 1.1.1 / DSM 467 / LMG 4362 / NCIMB 8255 / S1).